Reading from the N-terminus, the 294-residue chain is Acetyl-coenzyme A carboxylase carboxyl transferase subunit beta (294 aa).

Residues Val25–His294 enclose the CoA carboxyltransferase N-terminal domain. The Zn(2+) site is built by Cys29, Cys32, Cys48, and Cys51. The segment at Cys29–Cys51 adopts a C4-type zinc-finger fold.

It belongs to the AccD/PCCB family. Acetyl-CoA carboxylase is a heterohexamer composed of biotin carboxyl carrier protein (AccB), biotin carboxylase (AccC) and two subunits each of ACCase subunit alpha (AccA) and ACCase subunit beta (AccD). Zn(2+) is required as a cofactor.

The protein resides in the cytoplasm. It catalyses the reaction N(6)-carboxybiotinyl-L-lysyl-[protein] + acetyl-CoA = N(6)-biotinyl-L-lysyl-[protein] + malonyl-CoA. The protein operates within lipid metabolism; malonyl-CoA biosynthesis; malonyl-CoA from acetyl-CoA: step 1/1. Its function is as follows. Component of the acetyl coenzyme A carboxylase (ACC) complex. Biotin carboxylase (BC) catalyzes the carboxylation of biotin on its carrier protein (BCCP) and then the CO(2) group is transferred by the transcarboxylase to acetyl-CoA to form malonyl-CoA. In Aliivibrio fischeri (strain ATCC 700601 / ES114) (Vibrio fischeri), this protein is Acetyl-coenzyme A carboxylase carboxyl transferase subunit beta.